Consider the following 568-residue polypeptide: 2-succinyl-5-enolpyruvyl-6-hydroxy-3-cyclohexene-1-carboxylate synthase (568 aa).

It belongs to the TPP enzyme family. MenD subfamily. As to quaternary structure, homodimer. It depends on Mg(2+) as a cofactor. Requires Mn(2+) as cofactor. Thiamine diphosphate is required as a cofactor.

The catalysed reaction is isochorismate + 2-oxoglutarate + H(+) = 5-enolpyruvoyl-6-hydroxy-2-succinyl-cyclohex-3-ene-1-carboxylate + CO2. Its pathway is quinol/quinone metabolism; 1,4-dihydroxy-2-naphthoate biosynthesis; 1,4-dihydroxy-2-naphthoate from chorismate: step 2/7. It participates in quinol/quinone metabolism; menaquinone biosynthesis. In terms of biological role, catalyzes the thiamine diphosphate-dependent decarboxylation of 2-oxoglutarate and the subsequent addition of the resulting succinic semialdehyde-thiamine pyrophosphate anion to isochorismate to yield 2-succinyl-5-enolpyruvyl-6-hydroxy-3-cyclohexene-1-carboxylate (SEPHCHC). This chain is 2-succinyl-5-enolpyruvyl-6-hydroxy-3-cyclohexene-1-carboxylate synthase, found in Haemophilus influenzae (strain PittEE).